A 201-amino-acid polypeptide reads, in one-letter code: Small ribosomal subunit protein uS4c (201 aa).

The tract at residues 17–44 is disordered; that stretch reads ALPGLTNKKPRNGSDLRNQSRSGKKSQY. One can recognise an S4 RNA-binding domain in the interval 89 to 149; that stretch reads MRLDNILFRL…DEQKSRALIQ (61 aa).

Belongs to the universal ribosomal protein uS4 family. In terms of assembly, part of the 30S ribosomal subunit. Contacts protein S5. The interaction surface between S4 and S5 is involved in control of translational fidelity.

It is found in the plastid. Its subcellular location is the chloroplast. In terms of biological role, one of the primary rRNA binding proteins, it binds directly to 16S rRNA where it nucleates assembly of the body of the 30S subunit. With S5 and S12 plays an important role in translational accuracy. In Nicotiana sylvestris (Wood tobacco), this protein is Small ribosomal subunit protein uS4c (rps4).